Consider the following 76-residue polypeptide: Small ribosomal subunit protein bS16 (76 aa).

This sequence belongs to the bacterial ribosomal protein bS16 family.

This is Small ribosomal subunit protein bS16 from Helicobacter pylori (strain HPAG1).